The primary structure comprises 291 residues: 4-hydroxy-tetrahydrodipicolinate synthase (291 aa).

Threonine 47 is a pyruvate binding site. The active-site Proton donor/acceptor is the tyrosine 134. Lysine 162 acts as the Schiff-base intermediate with substrate in catalysis. Isoleucine 205 contributes to the pyruvate binding site.

This sequence belongs to the DapA family. Homotetramer; dimer of dimers.

It is found in the cytoplasm. It catalyses the reaction L-aspartate 4-semialdehyde + pyruvate = (2S,4S)-4-hydroxy-2,3,4,5-tetrahydrodipicolinate + H2O + H(+). The protein operates within amino-acid biosynthesis; L-lysine biosynthesis via DAP pathway; (S)-tetrahydrodipicolinate from L-aspartate: step 3/4. Catalyzes the condensation of (S)-aspartate-beta-semialdehyde [(S)-ASA] and pyruvate to 4-hydroxy-tetrahydrodipicolinate (HTPA). This chain is 4-hydroxy-tetrahydrodipicolinate synthase, found in Methanospirillum hungatei JF-1 (strain ATCC 27890 / DSM 864 / NBRC 100397 / JF-1).